We begin with the raw amino-acid sequence, 169 residues long: Small ribosomal subunit protein uS5 (169 aa).

Residues Leu15–Ile79 enclose the S5 DRBM domain.

This sequence belongs to the universal ribosomal protein uS5 family. Part of the 30S ribosomal subunit. Contacts proteins S4 and S8.

Functionally, with S4 and S12 plays an important role in translational accuracy. In terms of biological role, located at the back of the 30S subunit body where it stabilizes the conformation of the head with respect to the body. The chain is Small ribosomal subunit protein uS5 from Solibacter usitatus (strain Ellin6076).